Here is a 139-residue protein sequence, read N- to C-terminus: Putative pre-16S rRNA nuclease (139 aa).

Belongs to the YqgF nuclease family.

It localises to the cytoplasm. Functionally, could be a nuclease involved in processing of the 5'-end of pre-16S rRNA. In Haemophilus influenzae (strain PittEE), this protein is Putative pre-16S rRNA nuclease.